A 926-amino-acid polypeptide reads, in one-letter code: MADDDVLFEDVYELCEVIGKGPFSVVRRCINRETGQQFAVKIVDVAKFTSSPGLSTEDLKREASICHMLKHPHIVELLETYSSDGMLYMVFEFMDGADLCFEIVKRADAGFVYSEAVASHYMRQILEALRYCHDNNIIHRDVKPHCVLLASKENSAPVKLGGFGVAIQLGESGLVAGGRVGTPHFMAPEVVKREPYGKPVDVWGCGVILFILLSGCLPFYGTKERLFEGIIKGKYKMNPRQWSHISESAKDLVRRMLMLDPAERITVYEALNHPWLKERDRYAYKIHLPETVEQLRKFNARRKLKGAVLAAVSSHKFNSFYGDPPEELPDFSEDPTSSGLLAAERAVSQVLDSLEEIHALTDCSEKDLDFLHSVFQDQHLHTLLDLYDKINTKSSPQIRNPPSDAVQRAKEVLEEISCYPENNDAKELKRILTQPHFMALLQTHDVVAHEVYSDEALRVTPPPTSPYLNGDSPESANGDMDMENVTRVRLVQFQKNTDEPMGITLKMNELNHCIVARIMHGGMIHRQGTLHVGDEIREINGISVANQTVEQLQKMLREMRGSITFKIVPSYRTQSSSCERDSPSTSRQSPANGHSSTNNSVSDLPSTTQPKGRQIYVRAQFEYDPAKDDLIPCKEAGIRFRVGDIIQIISKDDHNWWQGKLENSKNGTAGLIPSPELQEWRVACIAMEKTKQEQQASCTWFGKKKKQYKDKYLAKHNAVFDQLDLVTYEEVVKLPAFKRKTLVLLGAHGVGRRHIKNTLITKHPDRFAYPIPHTTRPPKKDEENGKNYYFVSHDQMMQDISNNEYLEYGSHEDAMYGTKLETIRKIHEQGLIAILDVEPQALKVLRTAEFAPFVVFIAAPTITPGLNEDESLQRLQKESDVLQRTYAHYFDLTIINNEIDETIRHLEEAVELVCTAPQWVPVSWVY.

The 265-residue stretch at 12–276 (YELCEVIGKG…VYEALNHPWL (265 aa)) folds into the Protein kinase domain. Residues 18-26 (IGKGPFSVV) and K41 contribute to the ATP site. The residue at position 51 (S51) is a Phosphoserine. The active site involves D141. S151 and S155 each carry phosphoserine; by autocatalysis. A Phosphothreonine modification is found at T182. The calmodulin-binding stretch occupies residues 305 to 315 (KGAVLAAVSSH). S313 carries the post-translational modification Phosphoserine. L27 domains are found at residues 343-398 (AERA…SPQI) and 402-455 (PSDA…YSDE). The segment at 482–909 (MENVTRVRLV…DETIRHLEEA (428 aa)) is required for interaction with NRXN1 (via C-terminal tail). The region spanning 490 to 571 (LVQFQKNTDE…SITFKIVPSY (82 aa)) is the PDZ domain. 2 positions are modified to phosphoserine: S570 and Y571. Positions 574–610 (QSSSCERDSPSTSRQSPANGHSSTNNSVSDLPSTTQP) are disordered. In terms of domain architecture, SH3 spans 612–682 (GRQIYVRAQF…PSPELQEWRV (71 aa)). The 173-residue stretch at 739–911 (RKTLVLLGAH…TIRHLEEAVE (173 aa)) folds into the Guanylate kinase-like domain.

It in the N-terminal section; belongs to the protein kinase superfamily. CAMK Ser/Thr protein kinase family. CaMK subfamily. The protein belongs to the MAGUK family. CASK and LIN7 form a tripartite complex with CASKIN1. Component of the brain-specific heterotrimeric complex (LIN-10-LIN-2-LIN-7 complex) composed of at least APBA1, CASK, and LIN7, which associates with the motor protein KIF17 to transport vesicles along microtubules. Forms a heterotrimeric complex with DLG1 and LIN7B via their L27 domains. Identified in a complex with ACTN4, IQGAP1, MAGI2, NPHS1, SPTAN1 and SPTBN1. Part of a complex containing CASK, TBR1 and TSPYL2. Interacts with WHRN. Interacts (via the PDZ, SH3 and guanylate kinase-like domains) with NRXN1 (via C-terminus). Interacts with CASKIN1, APBA1, LIN7(A/B/C), and L27 domain of DLG1 and isoform 2 of DLG4. Interacts with FCHSD2. Interacts with KIRREL3. Interacts with TBR1. Interacts with TSPYL2. Unlike other protein kinases, does not require a divalent cation such as magnesium for catalytic activity. serves as cofactor.

It is found in the nucleus. It localises to the cytoplasm. The protein localises to the cell membrane. The catalysed reaction is L-seryl-[protein] + ATP = O-phospho-L-seryl-[protein] + ADP + H(+). The enzyme catalyses L-threonyl-[protein] + ATP = O-phospho-L-threonyl-[protein] + ADP + H(+). Differs from archetypal CaMK members in that the kinase domain exhibits a constitutively active conformation and the autoinhibitory region does not engage in direct contact with the ATP-binding cleft, although it still binds Ca(2+)/CAM. Functionally, multidomain scaffolding Mg(2+)-independent protein kinase that catalyzes the phosphotransfer from ATP to proteins such as NRXN1, and plays a role in synaptic transmembrane protein anchoring and ion channel trafficking. Contributes to neural development and regulation of gene expression via interaction with the transcription factor TBR1. Binds to cell-surface proteins, including amyloid precursor protein, neurexins, and syndecans. May mediate a link between the extracellular matrix and the actin cytoskeleton via its interaction with syndecan and with the actin/spectrin-binding protein 4.1. Component of the LIN-10-LIN-2-LIN-7 complex, which associates with the motor protein KIF17 to transport vesicles containing N-methyl-D-aspartate (NMDA) receptor subunit NR2B along microtubules. This chain is Peripheral plasma membrane protein CASK, found in Mus musculus (Mouse).